A 60-amino-acid polypeptide reads, in one-letter code: DNA-directed RNA polymerase subunit Rpo6 (60 aa).

This sequence belongs to the archaeal Rpo6/eukaryotic RPB6 RNA polymerase subunit family. As to quaternary structure, part of the RNA polymerase complex.

The protein resides in the cytoplasm. It carries out the reaction RNA(n) + a ribonucleoside 5'-triphosphate = RNA(n+1) + diphosphate. Its function is as follows. DNA-dependent RNA polymerase (RNAP) catalyzes the transcription of DNA into RNA using the four ribonucleoside triphosphates as substrates. The chain is DNA-directed RNA polymerase subunit Rpo6 from Halobacterium salinarum (strain ATCC 700922 / JCM 11081 / NRC-1) (Halobacterium halobium).